The following is a 316-amino-acid chain: uncharacterized protein (316 aa).

This sequence belongs to the chlamydial CPn_0441/CT_007/TC_0275 family.

This is an uncharacterized protein from Chlamydia pneumoniae (Chlamydophila pneumoniae).